A 144-amino-acid polypeptide reads, in one-letter code: MYLNTISPSRGSKHLSKRVGRGIGSGLGKTGGRGHKGQKSRSGGKVRLGFEGGQTPLYRRLPKFGFISRKAMVTQEIRLSDLSRVSDKVIDLNVLKTYNIISRKIKFVKIIMSGEIKRPITIRKLRVSKGARAAIQSIGGQIEE.

The span at 1–10 shows a compositional bias: polar residues; it reads MYLNTISPSR. Positions 1 to 51 are disordered; sequence MYLNTISPSRGSKHLSKRVGRGIGSGLGKTGGRGHKGQKSRSGGKVRLGFE. The span at 11–20 shows a compositional bias: basic residues; sequence GSKHLSKRVG. Residues 21 to 31 are compositionally biased toward gly residues; that stretch reads RGIGSGLGKTG. Basic residues predominate over residues 32 to 44; sequence GRGHKGQKSRSGG.

This sequence belongs to the universal ribosomal protein uL15 family. Part of the 50S ribosomal subunit.

Its function is as follows. Binds to the 23S rRNA. In Blochmanniella pennsylvanica (strain BPEN), this protein is Large ribosomal subunit protein uL15.